The sequence spans 99 residues: Large ribosomal subunit protein uL23 (99 aa).

Belongs to the universal ribosomal protein uL23 family. In terms of assembly, part of the 50S ribosomal subunit. Contacts protein L29, and trigger factor when it is bound to the ribosome.

Its function is as follows. One of the early assembly proteins it binds 23S rRNA. One of the proteins that surrounds the polypeptide exit tunnel on the outside of the ribosome. Forms the main docking site for trigger factor binding to the ribosome. This is Large ribosomal subunit protein uL23 from Pseudomonas aeruginosa (strain LESB58).